The following is a 60-amino-acid chain: Large ribosomal subunit protein bL32 (60 aa).

The segment at 1 to 21 (MAVPARHTSKAKKNKRRTHYK) is disordered. Basic residues predominate over residues 7-20 (HTSKAKKNKRRTHY).

Belongs to the bacterial ribosomal protein bL32 family.

In Streptococcus uberis (strain ATCC BAA-854 / 0140J), this protein is Large ribosomal subunit protein bL32.